Reading from the N-terminus, the 66-residue chain is ATP synthase protein 8 (66 aa).

A helical transmembrane segment spans residues 8–24 (PWPMVIMSMILTLFYIT). At Lys-54 the chain carries N6-acetyllysine; alternate. Lys-54 carries the N6-succinyllysine; alternate modification. Position 57 is an N6-acetyllysine (Lys-57).

The protein belongs to the ATPase protein 8 family. F-type ATPases have 2 components, CF(1) - the catalytic core - and CF(0) - the membrane proton channel. Component of an ATP synthase complex composed of ATP5PB, ATP5MC1, ATP5F1E, ATP5PD, ATP5ME, ATP5PF, ATP5MF, MT-ATP6, MT-ATP8, ATP5F1A, ATP5F1B, ATP5F1D, ATP5F1C, ATP5PO, ATP5MG, ATP5MK and ATP5MJ. Interacts with PRICKLE3.

The protein localises to the mitochondrion membrane. Functionally, mitochondrial membrane ATP synthase (F(1)F(0) ATP synthase or Complex V) produces ATP from ADP in the presence of a proton gradient across the membrane which is generated by electron transport complexes of the respiratory chain. F-type ATPases consist of two structural domains, F(1) - containing the extramembraneous catalytic core and F(0) - containing the membrane proton channel, linked together by a central stalk and a peripheral stalk. During catalysis, ATP synthesis in the catalytic domain of F(1) is coupled via a rotary mechanism of the central stalk subunits to proton translocation. Part of the complex F(0) domain. Minor subunit located with subunit a in the membrane. This is ATP synthase protein 8 (MT-ATP8) from Alouatta guariba (Brown howler monkey).